The chain runs to 285 residues: Undecaprenyl-diphosphatase (285 aa).

7 consecutive transmembrane segments (helical) span residues 12 to 34 (IVIA…HAVI), 49 to 69 (IFLP…LVYF), 93 to 113 (IHIL…GGLL), 120 to 140 (LFGT…LLLL), 159 to 179 (LTYA…LPGI), 234 to 254 (VATI…AFLM), and 263 to 283 (WALS…FFIL).

This sequence belongs to the UppP family.

It is found in the cell inner membrane. The catalysed reaction is di-trans,octa-cis-undecaprenyl diphosphate + H2O = di-trans,octa-cis-undecaprenyl phosphate + phosphate + H(+). In terms of biological role, catalyzes the dephosphorylation of undecaprenyl diphosphate (UPP). Confers resistance to bacitracin. This is Undecaprenyl-diphosphatase from Gluconacetobacter diazotrophicus (strain ATCC 49037 / DSM 5601 / CCUG 37298 / CIP 103539 / LMG 7603 / PAl5).